Consider the following 190-residue polypeptide: Xanthine phosphoribosyltransferase (190 aa).

Xanthine contacts are provided by Leu20 and Asn27. Residue 128–132 coordinates 5-phospho-alpha-D-ribose 1-diphosphate; the sequence is ANGKA. Position 156 (Lys156) interacts with xanthine.

The protein belongs to the purine/pyrimidine phosphoribosyltransferase family. Xpt subfamily. Homodimer.

The protein resides in the cytoplasm. The catalysed reaction is XMP + diphosphate = xanthine + 5-phospho-alpha-D-ribose 1-diphosphate. It participates in purine metabolism; XMP biosynthesis via salvage pathway; XMP from xanthine: step 1/1. Functionally, converts the preformed base xanthine, a product of nucleic acid breakdown, to xanthosine 5'-monophosphate (XMP), so it can be reused for RNA or DNA synthesis. The chain is Xanthine phosphoribosyltransferase from Pseudomonas putida (strain ATCC 700007 / DSM 6899 / JCM 31910 / BCRC 17059 / LMG 24140 / F1).